The primary structure comprises 163 residues: Probable metallophosphoesterase MG207 (163 aa).

7 residues coordinate Mn(2+): Asp9, His11, Asp34, Asn53, His75, His107, and His109.

Belongs to the metallophosphoesterase superfamily. YfcE family. Mn(2+) is required as a cofactor.

The protein is Probable metallophosphoesterase MG207 of Mycoplasma genitalium (strain ATCC 33530 / DSM 19775 / NCTC 10195 / G37) (Mycoplasmoides genitalium).